Consider the following 165-residue polypeptide: NADPH-dependent 7-cyano-7-deazaguanine reductase (165 aa).

Cysteine 56 (thioimide intermediate) is an active-site residue. The active-site Proton donor is aspartate 63. Substrate-binding positions include 78–80 (VES) and 97–98 (HE).

The protein belongs to the GTP cyclohydrolase I family. QueF type 1 subfamily.

The protein resides in the cytoplasm. It catalyses the reaction 7-aminomethyl-7-carbaguanine + 2 NADP(+) = 7-cyano-7-deazaguanine + 2 NADPH + 3 H(+). The protein operates within tRNA modification; tRNA-queuosine biosynthesis. Functionally, catalyzes the NADPH-dependent reduction of 7-cyano-7-deazaguanine (preQ0) to 7-aminomethyl-7-deazaguanine (preQ1). The chain is NADPH-dependent 7-cyano-7-deazaguanine reductase from Bacillus anthracis (strain A0248).